A 496-amino-acid polypeptide reads, in one-letter code: Lysine--tRNA ligase (496 aa).

Residues Glu-409 and Glu-416 each contribute to the Mg(2+) site.

This sequence belongs to the class-II aminoacyl-tRNA synthetase family. In terms of assembly, homodimer. Mg(2+) serves as cofactor.

The protein localises to the cytoplasm. The catalysed reaction is tRNA(Lys) + L-lysine + ATP = L-lysyl-tRNA(Lys) + AMP + diphosphate. This is Lysine--tRNA ligase from Streptococcus pneumoniae serotype 4 (strain ATCC BAA-334 / TIGR4).